The primary structure comprises 341 residues: Adenine deaminase (341 aa).

His-17, His-19, and His-197 together coordinate Zn(2+). Glu-200 functions as the Proton donor in the catalytic mechanism. Asp-278 contacts Zn(2+). Asp-279 provides a ligand contact to substrate.

It belongs to the metallo-dependent hydrolases superfamily. Adenosine and AMP deaminases family. Adenine deaminase type 2 subfamily. It depends on Zn(2+) as a cofactor.

The enzyme catalyses adenine + H2O + H(+) = hypoxanthine + NH4(+). In terms of biological role, catalyzes the hydrolytic deamination of adenine to hypoxanthine. Plays an important role in the purine salvage pathway and in nitrogen catabolism. This Chlorobium luteolum (strain DSM 273 / BCRC 81028 / 2530) (Pelodictyon luteolum) protein is Adenine deaminase.